A 457-amino-acid polypeptide reads, in one-letter code: Transcription factor E2F3 (457 aa).

The tract at residues 80–171 (LLPSVPGTEP…PKSPSEKTRY (92 aa)) is disordered. Polar residues predominate over residues 93–102 (SLYTTPQGPS). The segment at 96–145 (TTPQGPSSRVGLLQQPPAPGRGGGGGPPAKRRLELGESGHQYLSDGLKTP) is cyclin A/CDK2 binding. Residues 147–237 (GKGRAALRSP…KNNVQWMGCS (91 aa)) mediate DNA binding. A compositionally biased stretch (low complexity) spans 155–164 (SPDSPKTPKS). A leucine-zipper region spans residues 196-217 (LNKAAEVLKVQKRRIYDITNVL). The short motif at 201–237 (EVLKVQKRRIYDITNVLEGIHLIKKKSKNNVQWMGCS) is the DEF box element. A dimerization region spans residues 238–329 (LSEDGGMLAQ…VPDSIESLQI (92 aa)). The tract at residues 350 to 387 (HRPMKTNNQDHNGNIPKPTSKDLASNNSGHSDCSVSTA) is disordered. Residues 371-387 (DLASNNSGHSDCSVSTA) show a composition bias toward polar residues. Residues 383-457 (SVSTANLSPL…LPLVEDFMCS (75 aa)) are transactivation. The tract at residues 424-441 (EDYLLSLGEEEGISDLFD) is retinoblastoma protein binding.

Belongs to the E2F/DP family. In terms of assembly, component of the DRTF1/E2F transcription factor complex. Binds cooperatively with TFDP1/Dp-1 to E2F sites. Interacts with retinoblastoma protein RB1 and related proteins (such as RBL1) that inhibit the E2F transactivation domain. Binds EAPP.

The protein resides in the nucleus. Transcription activator that binds DNA cooperatively with DP proteins through the E2 recognition site, 5'-TTTC[CG]CGC-3' found in the promoter region of a number of genes whose products are involved in cell cycle regulation or in DNA replication. The DRTF1/E2F complex functions in the control of cell-cycle progression from G1 to S phase. E2F3 binds specifically to RB1 in a cell-cycle dependent manner. Inhibits adipogenesis, probably through the repression of CEBPA binding to its target gene promoters. In Mus musculus (Mouse), this protein is Transcription factor E2F3 (E2f3).